The sequence spans 249 residues: Isoprenyl transferase (249 aa).

The active site involves Asp29. A Mg(2+)-binding site is contributed by Asp29. Substrate-binding positions include 30-33 (GNGR), Trp34, Arg42, His46, and 74-76 (STE). Asn77 functions as the Proton acceptor in the catalytic mechanism. Substrate-binding positions include Trp78, Arg80, Arg197, and 203-205 (RLS). Residue Glu216 coordinates Mg(2+).

Belongs to the UPP synthase family. In terms of assembly, homodimer. It depends on Mg(2+) as a cofactor.

Functionally, catalyzes the condensation of isopentenyl diphosphate (IPP) with allylic pyrophosphates generating different type of terpenoids. The sequence is that of Isoprenyl transferase from Trichormus variabilis (strain ATCC 29413 / PCC 7937) (Anabaena variabilis).